We begin with the raw amino-acid sequence, 467 residues long: Asparagine--tRNA ligase (467 aa).

It belongs to the class-II aminoacyl-tRNA synthetase family. As to quaternary structure, homodimer.

The protein resides in the cytoplasm. It carries out the reaction tRNA(Asn) + L-asparagine + ATP = L-asparaginyl-tRNA(Asn) + AMP + diphosphate + H(+). The chain is Asparagine--tRNA ligase from Actinobacillus succinogenes (strain ATCC 55618 / DSM 22257 / CCUG 43843 / 130Z).